The following is a 313-amino-acid chain: Small ribosomal subunit protein uS2 (313 aa).

Over residues 233 to 256 (RTMTDKQSDVAKEAKADGKEEAPK) the composition is skewed to basic and acidic residues. A disordered region spans residues 233 to 293 (RTMTDKQSDV…SRKLVAAGTA (61 aa)).

Belongs to the universal ribosomal protein uS2 family.

This is Small ribosomal subunit protein uS2 from Bdellovibrio bacteriovorus (strain ATCC 15356 / DSM 50701 / NCIMB 9529 / HD100).